The chain runs to 472 residues: MKSELIFLPVPAFGHLVGMVEMAKLFISRHENLSVTVLISKFFIDTGIDNYNKSLLAKPTPRLTIINLPEIDPQKYLLKPRCAIFPSLIENQKTHVRDVMSRMTQSESTRIVGLLADILFVDIFDIADEFNVPTYVYSPAGTGFLGLAFHLQTLNDDKKQDVTEFRNSDTELLVPSFANPVPAEFSPSIFLEKDGRHDVLLSLYRRCREAKGIIVNTFEELEPYAINSLRMDSMIPPIYPVGPILNLNGEGQNSDEAAVILGWLDDQPPSSVVFLCFGSFGSFPENQVKEIAMGLERSGHRFLWSLRPCISEGETTLQLKYSNLELPAGFLDRTSCVRKVIGWAPQMAVLAHEAVGGFVSHCGWNSVLESVWYGMPVATWPMYGEQQLNAFEMVKELGLAVEIEVDYRNEYNKSDFIVKADEIETKIKKLMMDGKNSKIRKKVKEMKEKSRVAMSENGSSYTSLAKLFEEIM.

The active-site Proton acceptor is the histidine 15. An an anthocyanidin-binding site is contributed by histidine 15. Catalysis depends on aspartate 117, which acts as the Charge relay. 7 residues coordinate UDP-alpha-D-glucose: alanine 344, glutamine 346, histidine 361, tryptophan 364, asparagine 365, serine 366, and glutamate 369. Position 384 (glycine 384) interacts with an anthocyanidin. 2 residues coordinate UDP-alpha-D-glucose: glutamate 385 and glutamine 386.

The protein belongs to the UDP-glycosyltransferase family.

It carries out the reaction (20S)-ginsenoside F1 + UDP-alpha-D-glucose = (20S)-ginsenoside Rg1 + UDP + H(+). It functions in the pathway secondary metabolite biosynthesis; terpenoid biosynthesis. Functionally, probable component of the triterpene saponins (e.g. ginsenosides) biosynthetic pathway. No detectable activity toward protopanaxatriol (PPT). The polypeptide is UDP-glucosyltransferase 103 (Panax ginseng (Korean ginseng)).